The primary structure comprises 56 residues: Large ribosomal subunit protein bL32 (56 aa).

A disordered region spans residues 1–26 (MAVQQNKKSRSKRGMRRSHDALSTAQ). Residues 7–16 (KKSRSKRGMR) are compositionally biased toward basic residues.

Belongs to the bacterial ribosomal protein bL32 family.

This chain is Large ribosomal subunit protein bL32, found in Shewanella denitrificans (strain OS217 / ATCC BAA-1090 / DSM 15013).